A 209-amino-acid chain; its full sequence is Imidazole glycerol phosphate synthase subunit HisH (209 aa).

Residues 1-205 form the Glutamine amidotransferase type-1 domain; that stretch reads MIAIIDYGMG…KGVVETWKSS (205 aa). The active-site Nucleophile is the C79. Active-site residues include H180 and E182.

Heterodimer of HisH and HisF.

It is found in the cytoplasm. The enzyme catalyses 5-[(5-phospho-1-deoxy-D-ribulos-1-ylimino)methylamino]-1-(5-phospho-beta-D-ribosyl)imidazole-4-carboxamide + L-glutamine = D-erythro-1-(imidazol-4-yl)glycerol 3-phosphate + 5-amino-1-(5-phospho-beta-D-ribosyl)imidazole-4-carboxamide + L-glutamate + H(+). It carries out the reaction L-glutamine + H2O = L-glutamate + NH4(+). It participates in amino-acid biosynthesis; L-histidine biosynthesis; L-histidine from 5-phospho-alpha-D-ribose 1-diphosphate: step 5/9. In terms of biological role, IGPS catalyzes the conversion of PRFAR and glutamine to IGP, AICAR and glutamate. The HisH subunit catalyzes the hydrolysis of glutamine to glutamate and ammonia as part of the synthesis of IGP and AICAR. The resulting ammonia molecule is channeled to the active site of HisF. This is Imidazole glycerol phosphate synthase subunit HisH from Bacillus cereus (strain AH187).